A 360-amino-acid polypeptide reads, in one-letter code: Peptide chain release factor 1 (360 aa).

N5-methylglutamine is present on Q235. The interval 284-313 (AKRQQAEASTRRNLLGSGDRSDRNRTYNFP) is disordered.

The protein belongs to the prokaryotic/mitochondrial release factor family. Methylated by PrmC. Methylation increases the termination efficiency of RF1.

The protein localises to the cytoplasm. Peptide chain release factor 1 directs the termination of translation in response to the peptide chain termination codons UAG and UAA. This Escherichia coli (strain UTI89 / UPEC) protein is Peptide chain release factor 1.